A 595-amino-acid polypeptide reads, in one-letter code: Torsin-1A-interacting protein 1 (595 aa).

The interval 1-221 (MAGERWQAEG…GNTKTNEREA (221 aa)) is disordered. At 1–351 (MAGERWQAEG…NEPSVKIKWW (351 aa)) the chain is on the nuclear side. Basic and acidic residues predominate over residues 24–38 (PIREGRRRLDPRNGD). Serine 60 carries the phosphoserine modification. Basic and acidic residues-rich tracts occupy residues 70–101 (FEPR…EVRE) and 115–132 (RAQE…RLEQ). Over residues 133 to 143 (HSQQPQLSPAT) the composition is skewed to polar residues. Phosphoserine is present on residues serine 134, serine 140, serine 151, serine 153, serine 154, and serine 155. The segment covering 204–215 (LDSTYQTNGNTK) has biased composition (polar residues). Threonine 235 carries the phosphothreonine modification. Phosphoserine occurs at positions 241, 244, and 255. Disordered stretches follow at residues 250 to 286 (ARSS…PAHE) and 319 to 340 (IQKS…AIHH). Residues 251-262 (RSSDSLESRDEA) show a composition bias toward basic and acidic residues. The segment covering 319 to 335 (IQKSNFGNQSPSTSRPQ) has biased composition (polar residues). A Glycyl lysine isopeptide (Lys-Gly) (interchain with G-Cter in SUMO2) cross-link involves residue lysine 321. Phosphoserine is present on serine 328. A helical transmembrane segment spans residues 352–372 (LLGLVAILAVGLFWFFHTPAV). An interaction with TOR1A region spans residues 368–595 (HTPAVETTAV…ENTLKAGSCL (228 aa)). A coiled-coil region spans residues 373–400 (ETTAVQEFQNQMKQLQSKYQSQNEKLWK). Residues 373-595 (ETTAVQEFQN…ENTLKAGSCL (223 aa)) lie on the Perinuclear space side of the membrane. A glycan (N-linked (GlcNAc...) asparagine) is linked at asparagine 411.

This sequence belongs to the TOR1AIP family. In terms of assembly, interacts with ATP1B4. Interacts with TOR1A (ATP-bound). Interacts with TOR1B, TOR2A and TOR3A. Interacts with VIM. In terms of tissue distribution, expressed in the spinal cord and liver (at protein level).

The protein resides in the nucleus inner membrane. In terms of biological role, required for nuclear membrane integrity. Induces TOR1A and TOR1B ATPase activity and is required for their location on the nuclear membrane. Binds to A- and B-type lamins. Possible role in membrane attachment and assembly of the nuclear lamina. This Mus musculus (Mouse) protein is Torsin-1A-interacting protein 1 (Tor1aip1).